The primary structure comprises 200 residues: Glycerol-3-phosphate acyltransferase (200 aa).

5 consecutive transmembrane segments (helical) span residues 2 to 22, 51 to 71, 84 to 104, 114 to 134, and 159 to 179; these read FNIP…AVIV, KAAA…VLLA, AIAA…FFGF, LGVL…IWLV, and FFMP…LVLF.

This sequence belongs to the PlsY family. As to quaternary structure, probably interacts with PlsX.

It localises to the cell inner membrane. The catalysed reaction is an acyl phosphate + sn-glycerol 3-phosphate = a 1-acyl-sn-glycero-3-phosphate + phosphate. The protein operates within lipid metabolism; phospholipid metabolism. In terms of biological role, catalyzes the transfer of an acyl group from acyl-phosphate (acyl-PO(4)) to glycerol-3-phosphate (G3P) to form lysophosphatidic acid (LPA). This enzyme utilizes acyl-phosphate as fatty acyl donor, but not acyl-CoA or acyl-ACP. The chain is Glycerol-3-phosphate acyltransferase from Neisseria meningitidis serogroup B (strain ATCC BAA-335 / MC58).